The sequence spans 320 residues: GTP 3',8-cyclase (320 aa).

A Radical SAM core domain is found at 4-226; sequence TFQRSINYMR…PIITDATSPA (223 aa). Arginine 13 is a binding site for GTP. Cysteine 20 and cysteine 24 together coordinate [4Fe-4S] cluster. Residue tyrosine 26 coordinates S-adenosyl-L-methionine. Cysteine 27 contributes to the [4Fe-4S] cluster binding site. Arginine 63 lines the GTP pocket. Residue glycine 67 coordinates S-adenosyl-L-methionine. Threonine 94 contributes to the GTP binding site. Serine 118 contacts S-adenosyl-L-methionine. Lysine 155 provides a ligand contact to GTP. Residue methionine 189 participates in S-adenosyl-L-methionine binding. [4Fe-4S] cluster is bound by residues cysteine 249 and cysteine 252. Residue 254–256 participates in GTP binding; the sequence is RIR. Residue cysteine 266 participates in [4Fe-4S] cluster binding.

This sequence belongs to the radical SAM superfamily. MoaA family. Monomer and homodimer. The cofactor is [4Fe-4S] cluster.

It carries out the reaction GTP + AH2 + S-adenosyl-L-methionine = (8S)-3',8-cyclo-7,8-dihydroguanosine 5'-triphosphate + 5'-deoxyadenosine + L-methionine + A + H(+). The protein operates within cofactor biosynthesis; molybdopterin biosynthesis. In terms of biological role, catalyzes the cyclization of GTP to (8S)-3',8-cyclo-7,8-dihydroguanosine 5'-triphosphate. The protein is GTP 3',8-cyclase of Alkaliphilus metalliredigens (strain QYMF).